Here is a 613-residue protein sequence, read N- to C-terminus: Dihydroxy-acid dehydratase (613 aa).

Asp81 provides a ligand contact to Mg(2+). Cys122 is a [2Fe-2S] cluster binding site. Residues Asp123 and Lys124 each contribute to the Mg(2+) site. Lys124 is modified (N6-carboxylysine). Position 195 (Cys195) interacts with [2Fe-2S] cluster. Glu491 is a binding site for Mg(2+). Residue Ser517 is the Proton acceptor of the active site.

It belongs to the IlvD/Edd family. Homodimer. It depends on [2Fe-2S] cluster as a cofactor. Mg(2+) is required as a cofactor.

The enzyme catalyses (2R)-2,3-dihydroxy-3-methylbutanoate = 3-methyl-2-oxobutanoate + H2O. The catalysed reaction is (2R,3R)-2,3-dihydroxy-3-methylpentanoate = (S)-3-methyl-2-oxopentanoate + H2O. The protein operates within amino-acid biosynthesis; L-isoleucine biosynthesis; L-isoleucine from 2-oxobutanoate: step 3/4. Its pathway is amino-acid biosynthesis; L-valine biosynthesis; L-valine from pyruvate: step 3/4. Its function is as follows. Functions in the biosynthesis of branched-chain amino acids. Catalyzes the dehydration of (2R,3R)-2,3-dihydroxy-3-methylpentanoate (2,3-dihydroxy-3-methylvalerate) into 2-oxo-3-methylpentanoate (2-oxo-3-methylvalerate) and of (2R)-2,3-dihydroxy-3-methylbutanoate (2,3-dihydroxyisovalerate) into 2-oxo-3-methylbutanoate (2-oxoisovalerate), the penultimate precursor to L-isoleucine and L-valine, respectively. This Vibrio vulnificus (strain CMCP6) protein is Dihydroxy-acid dehydratase.